The primary structure comprises 267 residues: 4-hydroxy-tetrahydrodipicolinate reductase (267 aa).

NAD(+)-binding positions include glycine 12 to methionine 17, glycine 100 to threonine 102, and alanine 126 to phenylalanine 129. Histidine 156 functions as the Proton donor/acceptor in the catalytic mechanism. Position 157 (histidine 157) interacts with (S)-2,3,4,5-tetrahydrodipicolinate. Residue lysine 160 is the Proton donor of the active site. Glycine 166–threonine 167 serves as a coordination point for (S)-2,3,4,5-tetrahydrodipicolinate.

Belongs to the DapB family.

Its subcellular location is the cytoplasm. The enzyme catalyses (S)-2,3,4,5-tetrahydrodipicolinate + NAD(+) + H2O = (2S,4S)-4-hydroxy-2,3,4,5-tetrahydrodipicolinate + NADH + H(+). It catalyses the reaction (S)-2,3,4,5-tetrahydrodipicolinate + NADP(+) + H2O = (2S,4S)-4-hydroxy-2,3,4,5-tetrahydrodipicolinate + NADPH + H(+). It functions in the pathway amino-acid biosynthesis; L-lysine biosynthesis via DAP pathway; (S)-tetrahydrodipicolinate from L-aspartate: step 4/4. Its function is as follows. Catalyzes the conversion of 4-hydroxy-tetrahydrodipicolinate (HTPA) to tetrahydrodipicolinate. The polypeptide is 4-hydroxy-tetrahydrodipicolinate reductase (Bacillus velezensis (strain DSM 23117 / BGSC 10A6 / LMG 26770 / FZB42) (Bacillus amyloliquefaciens subsp. plantarum)).